Here is a 207-residue protein sequence, read N- to C-terminus: Octanoyltransferase (207 aa).

The region spanning 27–203 (ADTEDELWVV…HLETQFTPKA (177 aa)) is the BPL/LPL catalytic domain. Residues 66 to 73 (RGGQITYH), 133 to 135 (SLG), and 146 to 148 (GLA) contribute to the substrate site. Residue Cys164 is the Acyl-thioester intermediate of the active site.

This sequence belongs to the LipB family.

It is found in the cytoplasm. It catalyses the reaction octanoyl-[ACP] + L-lysyl-[protein] = N(6)-octanoyl-L-lysyl-[protein] + holo-[ACP] + H(+). The protein operates within protein modification; protein lipoylation via endogenous pathway; protein N(6)-(lipoyl)lysine from octanoyl-[acyl-carrier-protein]: step 1/2. Catalyzes the transfer of endogenously produced octanoic acid from octanoyl-acyl-carrier-protein onto the lipoyl domains of lipoate-dependent enzymes. Lipoyl-ACP can also act as a substrate although octanoyl-ACP is likely to be the physiological substrate. The chain is Octanoyltransferase from Neisseria meningitidis serogroup A / serotype 4A (strain DSM 15465 / Z2491).